The primary structure comprises 364 residues: Aminomethyltransferase (364 aa).

It belongs to the GcvT family. The glycine cleavage system is composed of four proteins: P, T, L and H.

It carries out the reaction N(6)-[(R)-S(8)-aminomethyldihydrolipoyl]-L-lysyl-[protein] + (6S)-5,6,7,8-tetrahydrofolate = N(6)-[(R)-dihydrolipoyl]-L-lysyl-[protein] + (6R)-5,10-methylene-5,6,7,8-tetrahydrofolate + NH4(+). Its function is as follows. The glycine cleavage system catalyzes the degradation of glycine. The protein is Aminomethyltransferase of Proteus mirabilis (strain HI4320).